Here is a 331-residue protein sequence, read N- to C-terminus: 3'-5' exonuclease (331 aa).

The disordered stretch occupies residues 27 to 92 (ERVKQTNAAK…EDGPASPEKE (66 aa)). Over residues 31–43 (QTNAAKKQIATNN) the composition is skewed to polar residues. Residues 47-67 (KNQDTPEMIKDKENAESENPP) are compositionally biased toward basic and acidic residues. A phosphoserine mark is found at Ser-80 and Ser-88. A 3'-5' exonuclease domain is found at 118–290 (SADEVMQWVE…IGQVIYREIE (173 aa)). The Mg(2+) site is built by Asp-140, Glu-142, and Asp-278.

Belongs to the WRNexo family.

The protein resides in the nucleus. In terms of biological role, has exonuclease activity on both single-stranded and duplex templates bearing overhangs, but not blunt ended duplex DNA, and cleaves in a 3'-5' direction. Essential for the formation of DNA replication focal centers. Has an important role in maintaining genome stability. The protein is 3'-5' exonuclease of Drosophila grimshawi (Hawaiian fruit fly).